Reading from the N-terminus, the 218-residue chain is Adenylate kinase (218 aa).

Residue 14 to 19 coordinates ATP; sequence GAGKGT. The NMP stretch occupies residues 34-63; it reads STGDMFRAAIKAGTELGKQAKALMDEGKLV. Residues Thr35, Arg40, 61 to 63, 89 to 92, and Gln96 each bind AMP; these read KLV and GFPR. The interval 126–163 is LID; it reads GRRVHQASGRSYHIVYNPPKVEGKDDVTGEDLIIRADD. Residues Arg127 and 136-137 each bind ATP; that span reads SY. 2 residues coordinate AMP: Arg160 and Arg171. Lys204 is an ATP binding site.

Belongs to the adenylate kinase family. In terms of assembly, monomer.

The protein resides in the cytoplasm. The enzyme catalyses AMP + ATP = 2 ADP. It functions in the pathway purine metabolism; AMP biosynthesis via salvage pathway; AMP from ADP: step 1/1. Functionally, catalyzes the reversible transfer of the terminal phosphate group between ATP and AMP. Plays an important role in cellular energy homeostasis and in adenine nucleotide metabolism. The protein is Adenylate kinase of Mannheimia succiniciproducens (strain KCTC 0769BP / MBEL55E).